Consider the following 181-residue polypeptide: Large ribosomal subunit protein uL5 (181 aa).

The protein belongs to the universal ribosomal protein uL5 family. In terms of assembly, part of the 50S ribosomal subunit; part of the 5S rRNA/L5/L18/L25 subcomplex. Contacts the 5S rRNA and the P site tRNA. Forms a bridge to the 30S subunit in the 70S ribosome.

This is one of the proteins that bind and probably mediate the attachment of the 5S RNA into the large ribosomal subunit, where it forms part of the central protuberance. In the 70S ribosome it contacts protein S13 of the 30S subunit (bridge B1b), connecting the 2 subunits; this bridge is implicated in subunit movement. Contacts the P site tRNA; the 5S rRNA and some of its associated proteins might help stabilize positioning of ribosome-bound tRNAs. The protein is Large ribosomal subunit protein uL5 of Mesomycoplasma hyopneumoniae (strain 232) (Mycoplasma hyopneumoniae).